The primary structure comprises 665 residues: Zinc finger CCCH domain-containing protein 45 (665 aa).

The segment at 1-55 (MDDGDLSFDFEGGLDQPPAGGGGGPAPHSSDPGGVGGGGGGGGPGDGGGHGRGRG) is disordered. The span at 33–50 (GGVGGGGGGGGPGDGGGH) shows a compositional bias: gly residues. C3H1-type zinc fingers lie at residues 58–85 (SYRQ…HQFD), 86–113 (KARM…HSYD), and 114–139 (DVKE…HVKL). Residues 167-256 (HNNYNQQGER…QATRIATPLP (90 aa)) are disordered. Residues 169–200 (NYNQQGERPQHPQGSGLPNQNSIDNTTTTTAQ) are compositionally biased toward polar residues. Over residues 205-238 (QQAQTTNQQPPQQQQQQQQQQQQQQKPNTNDQVQ) the composition is skewed to low complexity. Positions 239–250 (SVPNGSSNQATR) are enriched in polar residues. The YTH domain occupies 260–395 (SRYFIVKSCN…FIGEQLASLL (136 aa)). Residues 432 to 459 (DIVLFDDNEEEEEEESEEEEEGNGQESQ) are a coiled coil. The span at 439–454 (NEEEEEEESEEEEEGN) shows a compositional bias: acidic residues. Disordered stretches follow at residues 439–469 (NEEE…GMMW) and 561–665 (GPLM…SRKR). Over residues 561–573 (GPLMGGLGMGGPG) the composition is skewed to gly residues. Residues 596-623 (TKREQRRPGGERGDRYETTSDQGSRGHD) are compositionally biased toward basic and acidic residues.

This chain is Zinc finger CCCH domain-containing protein 45, found in Oryza sativa subsp. japonica (Rice).